The primary structure comprises 185 residues: uncharacterized protein (185 aa).

As to expression, component of the acid-insoluble and acid-soluble organic matrix of calcified layers of the shell (at protein level).

It is found in the secreted. This is an uncharacterized protein from Lottia gigantea (Giant owl limpet).